The chain runs to 430 residues: Rho GTPase-activating protein 2 (430 aa).

The tract at residues 1 to 36 (MTGLVMMTKGGGCGGGGKGGRRKSTAEEEEEEEQNQ) is disordered. Positions 9-18 (KGGGCGGGGK) are enriched in gly residues. In terms of domain architecture, CRIB spans 80-93 (IGWPTNVRHITHVT). The 186-residue stretch at 125–310 (VSAESMQCSY…TLAEREENAT (186 aa)) folds into the Rho-GAP domain. The interval 307 to 372 (ENATGSEGYS…HLSRHSTHED (66 aa)) is disordered. Positions 316–326 (SPSHSSNSQTD) are enriched in low complexity. Acidic residues predominate over residues 347–356 (ECGEEEEVEE). The segment covering 357 to 371 (VEQHQEHLSRHSTHE) has biased composition (basic and acidic residues).

As to quaternary structure, homodimerizes via its Rho-GAP domain and forms a tetrameric complex (2:2) with ARAC1/ROP3, ARAC2/ROP7, ARAC4/ROP2, ARAC5/ROP4, ARAC7/ROP9 or ARAC11/ROP1.

In terms of biological role, acts as a GTPase activator for the Rac-type GTPase by converting it to an inactive GDP-bound state. The protein is Rho GTPase-activating protein 2 (ROPGAP2) of Arabidopsis thaliana (Mouse-ear cress).